The chain runs to 495 residues: Histidine--tRNA ligase (495 aa).

The protein belongs to the class-II aminoacyl-tRNA synthetase family. Homodimer.

The protein resides in the cytoplasm. The catalysed reaction is tRNA(His) + L-histidine + ATP = L-histidyl-tRNA(His) + AMP + diphosphate + H(+). The chain is Histidine--tRNA ligase from Ruegeria pomeroyi (strain ATCC 700808 / DSM 15171 / DSS-3) (Silicibacter pomeroyi).